The chain runs to 476 residues: ATP synthase subunit beta (476 aa).

153–160 (GGAGVGKT) provides a ligand contact to ATP.

It belongs to the ATPase alpha/beta chains family. As to quaternary structure, F-type ATPases have 2 components, CF(1) - the catalytic core - and CF(0) - the membrane proton channel. CF(1) has five subunits: alpha(3), beta(3), gamma(1), delta(1), epsilon(1). CF(0) has three main subunits: a(1), b(2) and c(9-12). The alpha and beta chains form an alternating ring which encloses part of the gamma chain. CF(1) is attached to CF(0) by a central stalk formed by the gamma and epsilon chains, while a peripheral stalk is formed by the delta and b chains.

Its subcellular location is the cell membrane. The catalysed reaction is ATP + H2O + 4 H(+)(in) = ADP + phosphate + 5 H(+)(out). Functionally, produces ATP from ADP in the presence of a proton gradient across the membrane. The catalytic sites are hosted primarily by the beta subunits. The sequence is that of ATP synthase subunit beta from Latilactobacillus sakei subsp. sakei (strain 23K) (Lactobacillus sakei subsp. sakei).